Reading from the N-terminus, the 301-residue chain is GTPase Era (301 aa).

Residues 7–175 form the Era-type G domain; it reads YCGFIAIVGR…AGIVRKHLPE (169 aa). The G1 stretch occupies residues 15 to 22; that stretch reads GRPNVGKS. 15–22 lines the GTP pocket; sequence GRPNVGKS. The G2 stretch occupies residues 41 to 45; it reads QTTRH. A G3 region spans residues 62 to 65; that stretch reads DTPG. GTP-binding positions include 62 to 66 and 124 to 127; these read DTPGL and NKVD. The G4 stretch occupies residues 124–127; it reads NKVD. A G5 region spans residues 154-156; that stretch reads ISA. The region spanning 206–283 is the KH type-2 domain; it reads LGAELPYSVT…HLELWVKVKS (78 aa).

It belongs to the TRAFAC class TrmE-Era-EngA-EngB-Septin-like GTPase superfamily. Era GTPase family. As to quaternary structure, monomer.

The protein localises to the cytoplasm. It localises to the cell inner membrane. Functionally, an essential GTPase that binds both GDP and GTP, with rapid nucleotide exchange. Plays a role in 16S rRNA processing and 30S ribosomal subunit biogenesis and possibly also in cell cycle regulation and energy metabolism. This is GTPase Era from Salmonella paratyphi B (strain ATCC BAA-1250 / SPB7).